We begin with the raw amino-acid sequence, 213 residues long: Transcription antitermination protein NusB (213 aa).

This sequence belongs to the NusB family.

Its function is as follows. Involved in transcription antitermination. Required for transcription of ribosomal RNA (rRNA) genes. Binds specifically to the boxA antiterminator sequence of the ribosomal RNA (rrn) operons. This is Transcription antitermination protein NusB from Nostoc punctiforme (strain ATCC 29133 / PCC 73102).